A 284-amino-acid polypeptide reads, in one-letter code: Deoxyribonuclease-1 (284 aa).

An N-terminal signal peptide occupies residues 1-22 (MRAARLMGALLALAGLLQLALS). Asn40 is a glycosylation site (N-linked (GlcNAc...) asparagine). Residue Glu100 is part of the active site. Cys123 and Cys126 are oxidised to a cystine. Asn128 is a glycosylation site (N-linked (GlcNAc...) asparagine). Residue His156 is part of the active site. Cys195 and Cys231 are oxidised to a cystine.

The protein belongs to the DNase I family. The cofactor is Ca(2+). Mg(2+) serves as cofactor.

It localises to the secreted. The protein resides in the zymogen granule. It is found in the nucleus envelope. It catalyses the reaction Endonucleolytic cleavage to 5'-phosphodinucleotide and 5'-phosphooligonucleotide end-products.. Its function is as follows. Serum endocuclease secreted into body fluids by a wide variety of exocrine and endocrine organs. Expressed by non-hematopoietic tissues and preferentially cleaves protein-free DNA. Among other functions, seems to be involved in cell death by apoptosis. Binds specifically to G-actin and blocks actin polymerization. Together with DNASE1L3, plays a key role in degrading neutrophil extracellular traps (NETs). NETs are mainly composed of DNA fibers and are released by neutrophils to bind pathogens during inflammation. Degradation of intravascular NETs by DNASE1 and DNASE1L3 is required to prevent formation of clots that obstruct blood vessels and cause organ damage following inflammation. The polypeptide is Deoxyribonuclease-1 (DNASE1) (Sus scrofa (Pig)).